We begin with the raw amino-acid sequence, 117 residues long: Pterin-4-alpha-carbinolamine dehydratase 2 (117 aa).

N6-acetyllysine; alternate is present on residues K101, K105, and K112. N6-succinyllysine; alternate occurs at positions 101, 105, and 112.

The protein belongs to the pterin-4-alpha-carbinolamine dehydratase family. Homotetramer. Interacts with DYRK1B.

It catalyses the reaction (4aS,6R)-4a-hydroxy-L-erythro-5,6,7,8-tetrahydrobiopterin = (6R)-L-erythro-6,7-dihydrobiopterin + H2O. Functionally, involved in tetrahydrobiopterin biosynthesis. Seems to both prevent the formation of 7-pterins and accelerate the formation of quinonoid-BH2. In terms of biological role, regulates the dimerization of homeodomain protein HNF-1-alpha and enhances its transcriptional activity. The polypeptide is Pterin-4-alpha-carbinolamine dehydratase 2 (PCBD2) (Pongo abelii (Sumatran orangutan)).